We begin with the raw amino-acid sequence, 70 residues long: Cold shock-like protein CspJ (70 aa).

The CSD domain occupies glycine 7–valine 67.

The protein localises to the cytoplasm. The protein is Cold shock-like protein CspJ (cspJ) of Salmonella typhi.